Consider the following 416-residue polypeptide: Chaperone protein dnaJ A6 (416 aa).

The region spanning 12-73 (KYYEVLGVPK…EKRDIYDQYG (62 aa)) is the J domain. The CR-type zinc-finger motif lies at 133–217 (GSMKKLSLSR…CRASKVIQEK (85 aa)). The Zn(2+) site is built by Cys-146, Cys-149, Cys-162, Cys-165, Cys-189, Cys-192, Cys-205, and Cys-208. CXXCXGXG motif repeat units follow at residues 146–153 (CPKCKGKG), 162–169 (CYGCHGVG), and 189–196 (CPECRGSG). Over residues 380–399 (HDVNIEEEMRRKQYQRKQEA) the composition is skewed to basic and acidic residues. The tract at residues 380 to 416 (HDVNIEEEMRRKQYQRKQEAYDEDEEEDAPRVQCAQQ) is disordered.

Belongs to the DnaJ family. Interacts with ZFP1.

It is found in the nucleus. It localises to the cytoplasm. In terms of biological role, involved in disease resistance. Acts as a negative regulator of innate immunity to the rice blast fungus (Magnaporthe oryzae). Acts as a negative regulator of the pathogen-associated molecular pattern (PAMP)-triggered immunity (PTI) response through the inhibition of reactive oxygen species (ROS) accumulation and expression of defense-related genes. May function via the ubiquitin-proteasome degradation pathway. The protein is Chaperone protein dnaJ A6 of Oryza sativa subsp. japonica (Rice).